The chain runs to 62 residues: Zinc finger-containing protein P28b (62 aa).

The RING-type; degenerate zinc-finger motif lies at 1 to 46; that stretch reads MKLFTQNDRYFGLLDSCTHIFCITCINIWHKTRRETGASDNCPICR.

This is Zinc finger-containing protein P28b from Vaccinia virus (strain Western Reserve) (VACV).